A 214-amino-acid polypeptide reads, in one-letter code: UPF0502 protein Spro_2794 (214 aa).

It belongs to the UPF0502 family.

The polypeptide is UPF0502 protein Spro_2794 (Serratia proteamaculans (strain 568)).